The primary structure comprises 261 residues: Cytochrome c oxidase subunit 3 (261 aa).

The Mitochondrial matrix portion of the chain corresponds to 1 to 15; that stretch reads MTHQTHAYHMVNPSP. A helical transmembrane segment spans residues 16–34; the sequence is WPLTGALSALLMTSGLAMW. Residues 35–40 lie on the Mitochondrial intermembrane side of the membrane; that stretch reads FHFNST. A helical membrane pass occupies residues 41–66; that stretch reads ILLMIGLTTNTLTMYQWWRDVIREST. Topologically, residues 67 to 72 are mitochondrial matrix; it reads FQGHHT. The helical transmembrane segment at 73 to 105 threads the bilayer; it reads PTVQKGLRYGMILFIISEVLFFTGFFWAFYHSS. The Mitochondrial intermembrane portion of the chain corresponds to 106–128; that stretch reads LAPTPELGGCWPPTGIHPLNPLE. Residues 129 to 152 traverse the membrane as a helical segment; sequence VPLLNTSVLLASGVSITWAHHSLM. Topologically, residues 153–155 are mitochondrial matrix; the sequence is EGN. A helical membrane pass occupies residues 156 to 183; it reads RYPMLQALFITIALGVYFTLLQASEYYE. Over 184–190 the chain is Mitochondrial intermembrane; that stretch reads APFTISD. Residues 191-223 form a helical membrane-spanning segment; sequence GIYGSTFFVATGFHGLHVIIGSTFLIVCFFRQL. Topologically, residues 224 to 232 are mitochondrial matrix; the sequence is KFHFTSNHH. A helical transmembrane segment spans residues 233–256; the sequence is FGFEAAAWYWHFVDVVWLFLYVSI. At 257-261 the chain is on the mitochondrial intermembrane side; sequence YWWGS.

The protein belongs to the cytochrome c oxidase subunit 3 family. In terms of assembly, component of the cytochrome c oxidase (complex IV, CIV), a multisubunit enzyme composed of 14 subunits. The complex is composed of a catalytic core of 3 subunits MT-CO1, MT-CO2 and MT-CO3, encoded in the mitochondrial DNA, and 11 supernumerary subunits COX4I, COX5A, COX5B, COX6A, COX6B, COX6C, COX7A, COX7B, COX7C, COX8 and NDUFA4, which are encoded in the nuclear genome. The complex exists as a monomer or a dimer and forms supercomplexes (SCs) in the inner mitochondrial membrane with NADH-ubiquinone oxidoreductase (complex I, CI) and ubiquinol-cytochrome c oxidoreductase (cytochrome b-c1 complex, complex III, CIII), resulting in different assemblies (supercomplex SCI(1)III(2)IV(1) and megacomplex MCI(2)III(2)IV(2)).

It is found in the mitochondrion inner membrane. It catalyses the reaction 4 Fe(II)-[cytochrome c] + O2 + 8 H(+)(in) = 4 Fe(III)-[cytochrome c] + 2 H2O + 4 H(+)(out). Functionally, component of the cytochrome c oxidase, the last enzyme in the mitochondrial electron transport chain which drives oxidative phosphorylation. The respiratory chain contains 3 multisubunit complexes succinate dehydrogenase (complex II, CII), ubiquinol-cytochrome c oxidoreductase (cytochrome b-c1 complex, complex III, CIII) and cytochrome c oxidase (complex IV, CIV), that cooperate to transfer electrons derived from NADH and succinate to molecular oxygen, creating an electrochemical gradient over the inner membrane that drives transmembrane transport and the ATP synthase. Cytochrome c oxidase is the component of the respiratory chain that catalyzes the reduction of oxygen to water. Electrons originating from reduced cytochrome c in the intermembrane space (IMS) are transferred via the dinuclear copper A center (CU(A)) of subunit 2 and heme A of subunit 1 to the active site in subunit 1, a binuclear center (BNC) formed by heme A3 and copper B (CU(B)). The BNC reduces molecular oxygen to 2 water molecules using 4 electrons from cytochrome c in the IMS and 4 protons from the mitochondrial matrix. This Raphicerus melanotis (Cape grysbok) protein is Cytochrome c oxidase subunit 3 (MT-CO3).